Consider the following 163-residue polypeptide: Putative 4-hydroxy-4-methyl-2-oxoglutarate aldolase (163 aa).

Residues 76 to 79 (GDML) and Arg-98 each bind substrate. Residue Asp-99 participates in a divalent metal cation binding.

This sequence belongs to the class II aldolase/RraA-like family. In terms of assembly, homotrimer. A divalent metal cation serves as cofactor.

The enzyme catalyses 4-hydroxy-4-methyl-2-oxoglutarate = 2 pyruvate. It carries out the reaction oxaloacetate + H(+) = pyruvate + CO2. Functionally, catalyzes the aldol cleavage of 4-hydroxy-4-methyl-2-oxoglutarate (HMG) into 2 molecules of pyruvate. Also contains a secondary oxaloacetate (OAA) decarboxylase activity due to the common pyruvate enolate transition state formed following C-C bond cleavage in the retro-aldol and decarboxylation reactions. The chain is Putative 4-hydroxy-4-methyl-2-oxoglutarate aldolase from Pseudomonas putida (strain W619).